The primary structure comprises 875 residues: Alanine--tRNA ligase (875 aa).

Zn(2+) is bound by residues histidine 565, histidine 569, cysteine 666, and histidine 670.

Belongs to the class-II aminoacyl-tRNA synthetase family. Zn(2+) serves as cofactor.

It localises to the cytoplasm. It catalyses the reaction tRNA(Ala) + L-alanine + ATP = L-alanyl-tRNA(Ala) + AMP + diphosphate. Catalyzes the attachment of alanine to tRNA(Ala) in a two-step reaction: alanine is first activated by ATP to form Ala-AMP and then transferred to the acceptor end of tRNA(Ala). Also edits incorrectly charged Ser-tRNA(Ala) and Gly-tRNA(Ala) via its editing domain. The chain is Alanine--tRNA ligase from Methylibium petroleiphilum (strain ATCC BAA-1232 / LMG 22953 / PM1).